The chain runs to 67 residues: Conotoxin Cal6.35 (67 aa).

The N-terminal stretch at 1-22 (MKLTCVLIVAVLILTACQVIAA) is a signal peptide. Cystine bridges form between Cys43/Cys53, Cys46/Cys59, and Cys52/Cys66.

It belongs to the conotoxin O1 superfamily. As to expression, expressed by the venom duct.

It is found in the secreted. In terms of biological role, probable neurotoxin. The polypeptide is Conotoxin Cal6.35 (Californiconus californicus (California cone)).